A 270-amino-acid polypeptide reads, in one-letter code: Putative pyruvate, phosphate dikinase regulatory protein (270 aa).

149–156 (GVSRTSKT) contacts ADP.

Belongs to the pyruvate, phosphate/water dikinase regulatory protein family. PDRP subfamily.

The catalysed reaction is N(tele)-phospho-L-histidyl/L-threonyl-[pyruvate, phosphate dikinase] + ADP = N(tele)-phospho-L-histidyl/O-phospho-L-threonyl-[pyruvate, phosphate dikinase] + AMP + H(+). It carries out the reaction N(tele)-phospho-L-histidyl/O-phospho-L-threonyl-[pyruvate, phosphate dikinase] + phosphate + H(+) = N(tele)-phospho-L-histidyl/L-threonyl-[pyruvate, phosphate dikinase] + diphosphate. In terms of biological role, bifunctional serine/threonine kinase and phosphorylase involved in the regulation of the pyruvate, phosphate dikinase (PPDK) by catalyzing its phosphorylation/dephosphorylation. The chain is Putative pyruvate, phosphate dikinase regulatory protein from Sphingopyxis alaskensis (strain DSM 13593 / LMG 18877 / RB2256) (Sphingomonas alaskensis).